The primary structure comprises 256 residues: Type III pantothenate kinase (256 aa).

6–13 contacts ATP; sequence DVGNSHIY. Substrate contacts are provided by residues Tyr99 and 106 to 109; that span reads GADR. Asp108 (proton acceptor) is an active-site residue. Residue Asp129 coordinates K(+). Thr132 contributes to the ATP binding site. Residue Thr184 participates in substrate binding.

The protein belongs to the type III pantothenate kinase family. As to quaternary structure, homodimer. It depends on NH4(+) as a cofactor. The cofactor is K(+).

It is found in the cytoplasm. The catalysed reaction is (R)-pantothenate + ATP = (R)-4'-phosphopantothenate + ADP + H(+). Its pathway is cofactor biosynthesis; coenzyme A biosynthesis; CoA from (R)-pantothenate: step 1/5. Its function is as follows. Catalyzes the phosphorylation of pantothenate (Pan), the first step in CoA biosynthesis. This is Type III pantothenate kinase from Legionella pneumophila (strain Paris).